The following is a 242-amino-acid chain: Probable transcriptional regulatory protein XAC3151 (242 aa).

It belongs to the TACO1 family.

It is found in the cytoplasm. This chain is Probable transcriptional regulatory protein XAC3151, found in Xanthomonas axonopodis pv. citri (strain 306).